The chain runs to 685 residues: MAETNHSKRISELRSLLNKANHAYYILDSPLIEDAVFDRLYRELIELEKQYPSLVTPDSPSQRLGNKPATKFESIKHRIPLQSLDNAFNFDELNYWHSRMQKHLKSHSAMVCELKIDGNALALSYVNGVLTRGATRGDGAEGEEITANVKTIVSIPLSLHLQNPPAWVEIRGEAFIPNKVFISLNKERLKEEKQLFANPRNACSGTLRQLDSRIVASRHLDFFAYTIHLPDDWIPGETDPKKPKGQWEALLWLKAAGFRVNPNAKLISQPDQVEKFCIDWEKRRHQLPYTTDGIVIKIDDFKLQKTLGITQKAPRWAIALKYPAEEAPTQLNKLIFQTGRTGTVTPVAEFNPIPLGGTLVSKATLHNANRLSELDIHEGDTIVIRKAGEIIPEVIRVIKELRPNNAKKLVLPEKCPECNSKLLKETGEAATKCLNNDCPAILRGVLRHWVSKGAMNIDGFGTKLVEQLVKRKIIKSIAGIYELKEKNLENLERMGTKSAEKLLIEINNSKKQPWHKQLYGLGILHIGEANAKAIAEVFPSISLLADAAIASPESISNIYGIGSEITESLHKWFNCSINQNLIKELKDLGIALERVNEEGAIDNILMQEKLQFSGKTFVITGTMPSLSRANLEELIEREGGKVNSSVSSKTNYLVAGEKPGNKLKKAKELGIKVINEQELMTLISN.

Residues 34–38 (DAVFD), 83–84 (SL), and Glu113 each bind NAD(+). The N6-AMP-lysine intermediate role is filled by Lys115. NAD(+) is bound by residues Arg136, Glu173, Lys297, and Lys321. Residues Cys415, Cys418, Cys433, and Cys438 each coordinate Zn(2+). One can recognise a BRCT domain in the interval 607–685 (QEKLQFSGKT…EQELMTLISN (79 aa)).

The protein belongs to the NAD-dependent DNA ligase family. LigA subfamily. Mg(2+) is required as a cofactor. It depends on Mn(2+) as a cofactor.

It catalyses the reaction NAD(+) + (deoxyribonucleotide)n-3'-hydroxyl + 5'-phospho-(deoxyribonucleotide)m = (deoxyribonucleotide)n+m + AMP + beta-nicotinamide D-nucleotide.. DNA ligase that catalyzes the formation of phosphodiester linkages between 5'-phosphoryl and 3'-hydroxyl groups in double-stranded DNA using NAD as a coenzyme and as the energy source for the reaction. It is essential for DNA replication and repair of damaged DNA. In Prochlorococcus marinus (strain SARG / CCMP1375 / SS120), this protein is DNA ligase.